The sequence spans 131 residues: Leptin receptor overlapping transcript-like 1 (131 aa).

The next 4 helical transmembrane spans lie at 7–27 (LISL…GCAL), 32–52 (QYWP…YCIA), 69–89 (LAIF…IVFA), and 100–120 (ALVL…FLVF).

Belongs to the OB-RGRP/VPS55 family.

Its subcellular location is the membrane. Its function is as follows. Negatively regulates growth hormone (GH) receptor cell surface expression in liver. May play a role in liver resistance to GH during periods of reduced nutrient availability. This chain is Leptin receptor overlapping transcript-like 1 (LEPROTL1), found in Bos taurus (Bovine).